Here is a 794-residue protein sequence, read N- to C-terminus: Hyaluronan mediated motility receptor (794 aa).

The tract at residues 1 to 87 (MSFPKAPLKR…SQKNDKDVKR (87 aa)) is disordered. The residue at position 20 (S20) is a Phosphoserine. A compositionally biased stretch (basic and acidic residues) spans 74-87 (SKKDSQKNDKDVKR). Residues N134, N279, N446, N467, N488, N509, N530, N561, and N601 are each glycosylated (N-linked (GlcNAc...) asparagine). Residues 365–630 (EEMTSEKNVF…ITDLKNQLRQ (266 aa)) are required for interaction with FAM83D. 5 tandem repeats follow at residues 442 to 462 (QEKY…LESV), 463 to 483 (QEKY…LESE), 484 to 504 (QEKY…LESE), 505 to 525 (QEKY…LESV), and 526 to 546 (QEKY…LESY). Residues 442-546 (QEKYNDTAQS…RDVTAQLESY (105 aa)) form a 5 X 21 AA tandem repeats region. 2 hyaluronic acid-binding regions span residues 719-729 (KQKIKHVVKLK) and 741-750 (KLRSQLVKRK). At T784 the chain carries Phosphothreonine.

In terms of assembly, interacts with ANKRD26. Interacts with DYNLL1. Interacts with FAM83D/CHICA. As to expression, ubiquitously expressed.

It is found in the cell surface. The protein resides in the cytoplasm. It localises to the cytoskeleton. Its subcellular location is the spindle. In terms of biological role, receptor for hyaluronic acid (HA). Involved in cell motility. When hyaluronan binds to HMMR, the phosphorylation of a number of proteins, including the PTK2/FAK1 occurs. May also be involved in cellular transformation and metastasis formation, and in regulating extracellular-regulated kinase (ERK) activity. May act as a regulator of adipogenesis. This is Hyaluronan mediated motility receptor (Hmmr) from Mus musculus (Mouse).